Reading from the N-terminus, the 262-residue chain is Pyridoxine 5'-phosphate synthase (262 aa).

Asn6 contacts 3-amino-2-oxopropyl phosphate. Residue 8–9 participates in 1-deoxy-D-xylulose 5-phosphate binding; that stretch reads DH. Arg17 contributes to the 3-amino-2-oxopropyl phosphate binding site. His43 serves as the catalytic Proton acceptor. The 1-deoxy-D-xylulose 5-phosphate site is built by Arg45 and His50. The Proton acceptor role is filled by Glu70. Thr102 provides a ligand contact to 1-deoxy-D-xylulose 5-phosphate. His215 (proton donor) is an active-site residue. Residues Gly216 and 237-238 each bind 3-amino-2-oxopropyl phosphate; that span reads GH.

It belongs to the PNP synthase family. As to quaternary structure, homooctamer; tetramer of dimers.

The protein resides in the cytoplasm. It carries out the reaction 3-amino-2-oxopropyl phosphate + 1-deoxy-D-xylulose 5-phosphate = pyridoxine 5'-phosphate + phosphate + 2 H2O + H(+). It functions in the pathway cofactor biosynthesis; pyridoxine 5'-phosphate biosynthesis; pyridoxine 5'-phosphate from D-erythrose 4-phosphate: step 5/5. Functionally, catalyzes the complicated ring closure reaction between the two acyclic compounds 1-deoxy-D-xylulose-5-phosphate (DXP) and 3-amino-2-oxopropyl phosphate (1-amino-acetone-3-phosphate or AAP) to form pyridoxine 5'-phosphate (PNP) and inorganic phosphate. This chain is Pyridoxine 5'-phosphate synthase, found in Helicobacter pylori (strain P12).